Here is a 94-residue protein sequence, read N- to C-terminus: Acylphosphatase (94 aa).

Positions 3–90 (RVHVIVEGRV…PDEKQFRIMY (88 aa)) constitute an Acylphosphatase-like domain. Active-site residues include Arg18 and Asn36.

The protein belongs to the acylphosphatase family.

The enzyme catalyses an acyl phosphate + H2O = a carboxylate + phosphate + H(+). The sequence is that of Acylphosphatase (acyP) from Geobacillus thermodenitrificans (strain NG80-2).